Here is a 943-residue protein sequence, read N- to C-terminus: Translation initiation factor IF-2 (943 aa).

Positions 29-349 (LSVKSHSSSV…NNRGNSAPKL (321 aa)) are disordered. 5 stretches are compositionally biased toward basic and acidic residues: residues 69–82 (PKEEKVEPKVDKAS), 112–137 (FKAEREARAKAEAERRKNGGGRDNRN), 145–155 (QGKRHNNDRRN), 163–196 (DHNKGNRDNSTNHDRNFQGKLRNDQNQNNRRDNA), and 224–253 (RQSETRFREEKAAEQRRAKEQEKARKEKQQ). Low complexity predominate over residues 254 to 266 (AEVAVQKAAAETK). Residues 296 to 309 (KSRDNHRVNEDGPK) are compositionally biased toward basic and acidic residues. Over residues 313–332 (NNKWNNQNQVRNQRNSNWNK) the composition is skewed to low complexity. The region spanning 445-614 (ERAPVVTIMG…LLVAEVEELK (170 aa)) is the tr-type G domain. The interval 454–461 (GHVDHGKT) is G1. GTP is bound at residue 454–461 (GHVDHGKT). The interval 479–483 (GITQH) is G2. The G3 stretch occupies residues 500–503 (DTPG). Residues 500–504 (DTPGH) and 554–557 (NKID) contribute to the GTP site. Positions 554 to 557 (NKID) are G4. The interval 590–592 (SAK) is G5.

The protein belongs to the TRAFAC class translation factor GTPase superfamily. Classic translation factor GTPase family. IF-2 subfamily.

The protein resides in the cytoplasm. One of the essential components for the initiation of protein synthesis. Protects formylmethionyl-tRNA from spontaneous hydrolysis and promotes its binding to the 30S ribosomal subunits. Also involved in the hydrolysis of GTP during the formation of the 70S ribosomal complex. The polypeptide is Translation initiation factor IF-2 (Streptococcus thermophilus (strain ATCC BAA-491 / LMD-9)).